A 247-amino-acid polypeptide reads, in one-letter code: Anionic trypsin (247 aa).

The first 15 residues, 1–15 (MHPLLILAFVGAAVA), serve as a signal peptide directing secretion. A propeptide spans 16–23 (FPSDDDDK) (activation peptide). In terms of domain architecture, Peptidase S1 spans 24-244 (IVGGYTCAEN…YVDWIQETIA (221 aa)). Intrachain disulfides connect cysteine 30/cysteine 160, cysteine 48/cysteine 64, cysteine 132/cysteine 233, cysteine 139/cysteine 206, cysteine 171/cysteine 185, and cysteine 196/cysteine 220. The active-site Charge relay system is the histidine 63. Positions 75, 77, 80, and 85 each coordinate Ca(2+). Residue aspartate 107 is the Charge relay system of the active site. Catalysis depends on serine 200, which acts as the Charge relay system.

The protein belongs to the peptidase S1 family. It depends on Ca(2+) as a cofactor. Post-translationally, not sulfated on tyrosine residue(s).

It localises to the secreted. The protein localises to the extracellular space. It catalyses the reaction Preferential cleavage: Arg-|-Xaa, Lys-|-Xaa.. The polypeptide is Anionic trypsin (Bos taurus (Bovine)).